Reading from the N-terminus, the 155-residue chain is Ribonuclease HI (155 aa).

In terms of domain architecture, RNase H type-1 spans 1–142; sequence MTKQVEIFTD…CDELARAAAE (142 aa). Positions 10, 48, 70, and 134 each coordinate Mg(2+).

This sequence belongs to the RNase H family. In terms of assembly, monomer. Requires Mg(2+) as cofactor.

It localises to the cytoplasm. It carries out the reaction Endonucleolytic cleavage to 5'-phosphomonoester.. Endonuclease that specifically degrades the RNA of RNA-DNA hybrids. The chain is Ribonuclease HI from Vibrio vulnificus (strain CMCP6).